An 891-amino-acid polypeptide reads, in one-letter code: Tubulin polyglutamylase TTLL6 (891 aa).

2 disordered regions span residues 1–25 (MGAL…SSPA) and 44–106 (SQAR…KRKK). Residues 63–76 (SEEKGDSSKEDPKE) are compositionally biased toward basic and acidic residues. Low complexity predominate over residues 88-99 (GAQNGLQNAQQQ). Residues 106 to 449 (KKRLVINLSS…ESCDKKKVLE (344 aa)) form the TTL domain. ATP is bound by residues Lys223, 229-230 (QG), 251-254 (QLYI), and 264-266 (KFD). Gln229 lines the a protein pocket. Arg290 is a binding site for L-glutamate. An ATP-binding site is contributed by 312–313 (TN). Residues Tyr314, Ser315, and Lys332 each contribute to the L-glutamate site. Mg(2+) is bound by residues Asp395, Glu408, and Asn410. His411 contributes to the a protein binding site. The tract at residues 420–499 (RLDKEVKDGL…CGGFRLIYPS (80 aa)) is c-MTBD region. Lys426 is a binding site for L-glutamate. 4 disordered regions span residues 546–584 (QMKK…ATQA), 607–636 (GERK…LTSA), 687–711 (TTPE…TASS), and 800–820 (NNLS…DSSG). Over residues 687–699 (TTPESTTQLSISP) the composition is skewed to polar residues.

It belongs to the tubulin--tyrosine ligase family. As to quaternary structure, found in a complex with CEP41. It depends on Mg(2+) as a cofactor.

The protein resides in the cytoplasm. The protein localises to the cytoskeleton. It localises to the cilium axoneme. Its subcellular location is the cilium basal body. The enzyme catalyses L-glutamyl-[protein] + L-glutamate + ATP = gamma-L-glutamyl-L-glutamyl-[protein] + ADP + phosphate + H(+). It carries out the reaction (L-glutamyl)(n)-gamma-L-glutamyl-L-glutamyl-[protein] + L-glutamate + ATP = (L-glutamyl)(n+1)-gamma-L-glutamyl-L-glutamyl-[protein] + ADP + phosphate + H(+). Functionally, polyglutamylase which modifies both tubulin and non-tubulin proteins, generating alpha-linked polyglutamate side chains on the gamma-carboxyl group of specific glutamate residues of target proteins. Preferentially mediates ATP-dependent long polyglutamate chain elongation over the initiation step of the polyglutamylation reaction. Preferentially modifies the alpha-tubulin tail over a beta-tail. Promotes tubulin polyglutamylation which stimulates spastin/SPAST-mediated microtubule severing, thereby regulating microtubule functions. Mediates microtubule polyglutamylation in primary cilia axoneme, which is important for ciliary structural formation and motility. Mediates microtubule polyglutamylation in motile cilia, necessary for the regulation of ciliary coordinated beating. Polyglutamylates non-tubulin protein nucleotidyltransferase CGAS, leading to CGAS DNA-binding inhibition, thereby preventing antiviral defense response. The polypeptide is Tubulin polyglutamylase TTLL6 (Homo sapiens (Human)).